Here is a 221-residue protein sequence, read N- to C-terminus: Casparian strip membrane protein 2 (221 aa).

A disordered region spans residues 1-21 (MEKSEATTIEIGETSRESKGK). Residues 1-41 (MEKSEATTIEIGETSRESKGKTPLLAEVEQTARTAGSYRRG) are Cytoplasmic-facing. The chain crosses the membrane as a helical span at residues 42–62 (VAIFDLILRVSAATSALAATI). Residues 63 to 89 (TMGTTEQTLPFFTQFFQFQASYDDLPA) are Extracellular-facing. Residues 90–110 (FTFFVIALSIVTGYLVLSVPF) traverse the membrane as a helical segment. Topologically, residues 111–131 (SVVCIAQPLAAVPRLLLIVCD) are cytoplasmic. Residues 132-152 (TLTVTLATAAASSSAAIVYLA) form a helical membrane-spanning segment. Over 153–221 (HNGNADANWL…HYWDRRWCEI (69 aa)) the chain is Extracellular.

This sequence belongs to the Casparian strip membrane proteins (CASP) family. In terms of assembly, homodimer and heterodimers.

The protein localises to the cell membrane. Its function is as follows. Regulates membrane-cell wall junctions and localized cell wall deposition. Required for establishment of the Casparian strip membrane domain (CSD) and the subsequent formation of Casparian strips, a cell wall modification of the root endodermis that determines an apoplastic barrier between the intraorganismal apoplasm and the extraorganismal apoplasm and prevents lateral diffusion. The protein is Casparian strip membrane protein 2 of Erythranthe guttata (Yellow monkey flower).